A 444-amino-acid polypeptide reads, in one-letter code: Protein EVI2B (444 aa).

The signal sequence occupies residues 1–23 (MEFKYLVFIVLCQYLDNTFFSET). Residues 24–203 (EAITTEQQSL…GTAHKNNHNA (180 aa)) lie on the Extracellular side of the membrane. 4 N-linked (GlcNAc...) asparagine glycosylation sites follow: Asn-63, Asn-94, Asn-104, and Asn-127. Composition is skewed to polar residues over residues 104-131 (NNSL…STGQ) and 160-171 (THNQPTKSTPTI). Positions 104–197 (NNSLPQTSPS…EPPSGKGTAH (94 aa)) are disordered. A compositionally biased stretch (pro residues) spans 177–187 (TPPPPPPPLTS). Residues 204–224 (IAAILIGTIIISMLVAILMII) form a helical membrane-spanning segment. At 225–444 (LWKYLRKPVL…SLPPPPTELL (220 aa)) the chain is on the cytoplasmic side. At Thr-250 the chain carries Phosphothreonine. A phosphoserine mark is found at Ser-269, Ser-272, Ser-279, and Ser-295. Polar residues-rich tracts occupy residues 318–332 (SEDS…TAVS) and 361–370 (SPLPNDSINP). Disordered stretches follow at residues 318-337 (SEDS…DDAD) and 361-444 (SPLP…TELL).

In terms of tissue distribution, expressed in myeloid and lymphoid progenitors and increased in mature hematopoietic populations with the highest levels in granulocytes.

It is found in the membrane. In terms of biological role, required for granulocyte differentiation and functionality of hematopoietic progenitor cells through the control of cell cycle progression and survival of hematopoietic progenitor cells. In Mus musculus (Mouse), this protein is Protein EVI2B.